We begin with the raw amino-acid sequence, 143 residues long: Putative RNA polymerase II subunit B1 CTD phosphatase RPAP2 homolog (143 aa).

An RTR1-type zinc finger spans residues 46-129; that stretch reads SLLCEIGPPN…VPTSPLWLRD (84 aa). Cys69, Cys74, Cys105, and Cys109 together coordinate Zn(2+).

The protein belongs to the RPAP2 family.

It is found in the nucleus. It catalyses the reaction O-phospho-L-seryl-[protein] + H2O = L-seryl-[protein] + phosphate. The catalysed reaction is O-phospho-L-threonyl-[protein] + H2O = L-threonyl-[protein] + phosphate. Functionally, putative RNA polymerase II subunit B1 C-terminal domain (CTD) phosphatase involved in RNA polymerase II transcription regulation. The polypeptide is Putative RNA polymerase II subunit B1 CTD phosphatase RPAP2 homolog (Drosophila melanogaster (Fruit fly)).